The primary structure comprises 98 residues: Integration host factor subunit beta (98 aa).

This sequence belongs to the bacterial histone-like protein family. In terms of assembly, heterodimer of an alpha and a beta chain.

This protein is one of the two subunits of integration host factor, a specific DNA-binding protein that functions in genetic recombination as well as in transcriptional and translational control. The sequence is that of Integration host factor subunit beta from Pseudomonas putida (strain GB-1).